The chain runs to 339 residues: UDP-3-O-acylglucosamine N-acyltransferase (339 aa).

Residue H251 is the Proton acceptor of the active site.

This sequence belongs to the transferase hexapeptide repeat family. LpxD subfamily. In terms of assembly, homotrimer.

The enzyme catalyses a UDP-3-O-[(3R)-3-hydroxyacyl]-alpha-D-glucosamine + a (3R)-hydroxyacyl-[ACP] = a UDP-2-N,3-O-bis[(3R)-3-hydroxyacyl]-alpha-D-glucosamine + holo-[ACP] + H(+). Its pathway is bacterial outer membrane biogenesis; LPS lipid A biosynthesis. Functionally, catalyzes the N-acylation of UDP-3-O-acylglucosamine using 3-hydroxyacyl-ACP as the acyl donor. Is involved in the biosynthesis of lipid A, a phosphorylated glycolipid that anchors the lipopolysaccharide to the outer membrane of the cell. This Paramagnetospirillum magneticum (strain ATCC 700264 / AMB-1) (Magnetospirillum magneticum) protein is UDP-3-O-acylglucosamine N-acyltransferase.